The following is a 204-amino-acid chain: Large ribosomal subunit protein eL15 (204 aa).

It belongs to the eukaryotic ribosomal protein eL15 family. As to quaternary structure, component of the large ribosomal subunit.

The protein localises to the cytoplasm. In terms of biological role, component of the large ribosomal subunit. The ribosome is a large ribonucleoprotein complex responsible for the synthesis of proteins in the cell. In Tachysurus fulvidraco (Yellow catfish), this protein is Large ribosomal subunit protein eL15 (rpl15).